A 574-amino-acid polypeptide reads, in one-letter code: Phenylalanine--tRNA ligase beta subunit (574 aa).

A B5 domain is found at 278-353; that stretch reads LTPKEFEVEL…IAYGYNEIEP (76 aa). Positions 331, 337, 340, and 341 each coordinate Mg(2+).

Belongs to the phenylalanyl-tRNA synthetase beta subunit family. Type 2 subfamily. Tetramer of two alpha and two beta subunits. The cofactor is Mg(2+).

Its subcellular location is the cytoplasm. It carries out the reaction tRNA(Phe) + L-phenylalanine + ATP = L-phenylalanyl-tRNA(Phe) + AMP + diphosphate + H(+). The sequence is that of Phenylalanine--tRNA ligase beta subunit from Thermococcus kodakarensis (strain ATCC BAA-918 / JCM 12380 / KOD1) (Pyrococcus kodakaraensis (strain KOD1)).